A 503-amino-acid polypeptide reads, in one-letter code: ATP synthase subunit alpha (503 aa).

Residue 170–177 (GDRKTGKT) participates in ATP binding.

It belongs to the ATPase alpha/beta chains family. As to quaternary structure, F-type ATPases have 2 components, CF(1) - the catalytic core - and CF(0) - the membrane proton channel. CF(1) has five subunits: alpha(3), beta(3), gamma(1), delta(1), epsilon(1). CF(0) has four main subunits: a, b, b' and c.

It is found in the cellular thylakoid membrane. It carries out the reaction ATP + H2O + 4 H(+)(in) = ADP + phosphate + 5 H(+)(out). Produces ATP from ADP in the presence of a proton gradient across the membrane. The alpha chain is a regulatory subunit. This Rippkaea orientalis (strain PCC 8801 / RF-1) (Cyanothece sp. (strain PCC 8801)) protein is ATP synthase subunit alpha.